Consider the following 640-residue polypeptide: 1,4-alpha-glucan branching enzyme GlgB (640 aa).

Asp318 serves as the catalytic Nucleophile. The Proton donor role is filled by Glu371.

Belongs to the glycosyl hydrolase 13 family. GlgB subfamily. As to quaternary structure, monomer.

The enzyme catalyses Transfers a segment of a (1-&gt;4)-alpha-D-glucan chain to a primary hydroxy group in a similar glucan chain.. The protein operates within glycan biosynthesis; glycogen biosynthesis. In terms of biological role, catalyzes the formation of the alpha-1,6-glucosidic linkages in glycogen by scission of a 1,4-alpha-linked oligosaccharide from growing alpha-1,4-glucan chains and the subsequent attachment of the oligosaccharide to the alpha-1,6 position. This chain is 1,4-alpha-glucan branching enzyme GlgB, found in Francisella tularensis subsp. holarctica (strain LVS).